We begin with the raw amino-acid sequence, 129 residues long: Glycine cleavage system H protein (129 aa).

The 83-residue stretch at 24-106 folds into the Lipoyl-binding domain; sequence SYTVGITEHA…YGEGWFFRVM (83 aa). Lysine 65 is modified (N6-lipoyllysine).

Belongs to the GcvH family. As to quaternary structure, the glycine cleavage system is composed of four proteins: P, T, L and H. It depends on (R)-lipoate as a cofactor.

The glycine cleavage system catalyzes the degradation of glycine. The H protein shuttles the methylamine group of glycine from the P protein to the T protein. The chain is Glycine cleavage system H protein from Shewanella baltica (strain OS185).